A 212-amino-acid chain; its full sequence is Thymidylate kinase (212 aa).

Residue 10–17 (GLEGAGKT) participates in ATP binding.

The protein belongs to the thymidylate kinase family.

It catalyses the reaction dTMP + ATP = dTDP + ADP. Functionally, phosphorylation of dTMP to form dTDP in both de novo and salvage pathways of dTTP synthesis. This Photorhabdus laumondii subsp. laumondii (strain DSM 15139 / CIP 105565 / TT01) (Photorhabdus luminescens subsp. laumondii) protein is Thymidylate kinase.